Here is a 332-residue protein sequence, read N- to C-terminus: Spherulin-4 (332 aa).

The signal sequence occupies residues 1–22 (MNIKIVVLVIFAILLGSALAWH). The segment at 26 to 60 (HHNPTKAPTEAPHRGGGGGGGHNTPAPTQPPRQNT) is disordered.

The polypeptide is Spherulin-4 (Physarum polycephalum (Slime mold)).